The following is a 521-amino-acid chain: Cell adhesion molecule CEACAM1 (521 aa).

The signal sequence occupies residues 1–34; sequence MELASAHLHKGQVPWGGLLLTASLLASWSPATTA. Residues 35 to 142 enclose the Ig-like V-type domain; that stretch reads EVTIEAVPPQ…QATVRFHVHP (108 aa). Over 35-428 the chain is Extracellular; sequence EVTIEAVPPQ…GGLSDGAIAG (394 aa). Residues 39–142 form a required for homophilic binding region; it reads EAVPPQVAED…QATVRFHVHP (104 aa). Residues N71, N89, N104, N148, N152, N199, N206, N210, N226, N258, N290, N294, N304, N317, N333, and N375 are each glycosylated (N-linked (GlcNAc...) asparagine). 3 consecutive Ig-like C2-type domains span residues 147 to 234, 239 to 319, and 323 to 411; these read PNIT…FSLN, PDTP…KNIT, and PVTQ…IKLD. Residues C167 and C217 are joined by a disulfide bond. C261 and C301 are joined by a disulfide. A disulfide bond links C346 and C394. Residues 429–447 form a helical membrane-spanning segment; it reads IVIGVVAGVALIAGLAYFL. Residues 445-457 form an interaction with calmodulin region; sequence YFLYSRKSGGGSD. The tract at residues 447-521 is interaction with FLNA; the sequence is LYSRKSGGGS…ETVYSEVKKK (75 aa). Topologically, residues 448 to 521 are cytoplasmic; the sequence is YSRKSGGGSD…ETVYSEVKKK (74 aa). The disordered stretch occupies residues 455–521; the sequence is GSDQRDLTEH…ETVYSEVKKK (67 aa). Basic and acidic residues predominate over residues 457–466; that stretch reads DQRDLTEHKP. Residues 467 to 481 show a composition bias toward polar residues; the sequence is STSNHNLAPSDNSPN. A required for interaction with PTPN11 and PTPN6 and for control of phosphorylation level region spans residues 484–521; that stretch reads DDVAYTVLNFNSQQPNRPTSAPSSPRATETVYSEVKKK. Phosphotyrosine; by SRC, LCK, INSR and EGFR is present on Y488. The span at 491–514 shows a compositional bias: polar residues; the sequence is LNFNSQQPNRPTSAPSSPRATETV. Phosphoserine is present on S503. The residue at position 515 (Y515) is a Phosphotyrosine; by INSR, SRC and LCK. An essential for interaction with PTPN11 and PTPN6 region spans residues 515 to 518; the sequence is YSEV.

Belongs to the immunoglobulin superfamily. CEA family. In terms of assembly, (Microbial infection) Interacts with MHV S1 spike glycoprotein. Monomer. Oligomer. Heterodimer. Homodimer. Cis-dimer/oligomer (via Ig-like C2-type and/or via cytoplasmic domains); induced by trans-homophilic cell adhesion through an allosteric mechanism transmitted by the Ig-like V-type domain, and is regulated by intracellular calcium and calmodulin. Interacts (via cytoplasmic domain) with calmodulin in a calcium dependent manner; reduces homophilic cell adhesion through dissociation of dimer. Isoform 1 interacts (via cytoplasmic domain) with PTPN11 (preferentially) and PTPN6; cis-homodimer form is preferred; this interaction is decreased by formation of isoform 1 / isoform 2 cis-heterodimers and is dependent on the monomer/dimer equilibrium; this interaction is phosphorylation-dependent. Isoform 1 interacts with LYN. Isoform 1 interacts (via cytoplasmic domain) with SRC (via SH2 domain); this interaction is regulated by trans-homophilic cell adhesion. Isoform 1 interacts with LCK; mediates phosphorylation at Tyr-488 and Tyr-515 resulting in PTPN6 association. Isoform 1 interacts with PTPN6; this interaction is phosphorylation-dependent and causes a profound decrease in TCR stimulation-induced CD247 and ZAP70 phosphorylation. Isoform 1 interacts with TCR/CD3 complex through TCR beta chain and CD3E; colocalizes at the cell surface and upon stimulation of the TCR/CD3 complex recruits PTPN6 in the TCR/CD3 complex, resulting in dephosphorylation of CD247 and ZAP70. Isoform 1 interacts (via cytoplasmic domain) with SHC1 (via SH2 domain); SHC1 mediates interaction with INSR or EGFR in a Ser-503 phosphorylation-dependent manner. Isoform 1 interacts with EGFR; the interaction is indirect. Isoform 1 interacts with CSF3R; down-regulates the CSF3R-STAT3 pathway through recruitment of PTPN6 that dephosphorylates CSF3R. Isoform 1 (phosphorylated form) interacts with TLR4 and SYK; recruits PTPN6 that dephosphorylates SYK, reducing the production of reactive oxygen species (ROS) and lysosome disruption, leading to a reduction of the inflammasome activity. Isoform 1 interacts with FLNA; inhibits cell migration and cell scattering by interfering with the interaction of FLNA with RALA. Isoform 1 interacts (via cytoplasmic domain) with PXN; the interaction is phosphotyrosyl-dependent. Isoform 1 interacts with KLRK1; recruits PTPN6 that dephosphorylates VAV1. Isoform 1 interacts with CEACAM8. Isoform 1 interacts with FASN; this interaction is insulin and phosphorylation-dependent; reduces fatty-acid synthase activity. Interacts (via Ig-like V-type) with HAVCR2 (via Ig-like V-type); facilitates the maturation and cell surface expression of HAVCR2 thereby regulating T-cell tolerance induction. Isoform 2 interacts (via the cytoplasmic domain) with ANXA2; this interaction is regulated by phosphorylation and appears in the AIIt complex. Interacts (via Lewis X moieties) with CD209 (via C-type lectin domain); this interaction is regulated by the glycosylation pattern of CEACAM1 on cell types and regulates contact between dendritic cells and neutrophils. In terms of processing, phosphorylated on serine and tyrosine. Isoform 1 is phosphorylated on tyrosine by Src family kinases like SRC and LCK and by receptor like CSF3R, EGFR and INSR upon stimulation. Phosphorylated at Ser-503; mediates activity. Phosphorylated at Tyr-488; regulates activity. Phosphorylated at Tyr-488 by EGFR and INSR upon stimulation; this phosphorylation is Ser-503-phosphorylation-dependent; mediates cellular internalization; increases interaction with FASN. Phosphorylated at Tyr-488 and Tyr-515 by LCK; mediates PTPN6 association and is regulated by homophilic ligation of CEACAM1 in the absence of T-cell activation. Phosphorylated at Tyr-515; mediates interaction with PTPN11. Post-translationally, phosphorylated on serine and threonine. Expressed in granulocytes, lymphocytes, granulocytes, B cells, and T-cells. Expressed in bone. Highly expressed in liver and femur. Highly expressed in neutrophils, and to a lesser extent inmonocytes, and macrophages. Slightly higher expressed in peripheral blood neutrophils (PBNs). Intestinal T-cells predominantly express isoform 2 while extraintestinal T-cells mainly express isoform 1. Expressed in small intestine and colon.

It localises to the cell membrane. The protein resides in the lateral cell membrane. The protein localises to the apical cell membrane. Its subcellular location is the basal cell membrane. It is found in the cell junction. It localises to the adherens junction. The protein resides in the cytoplasmic vesicle. The protein localises to the secretory vesicle. Its subcellular location is the cell projection. It is found in the microvillus membrane. Its function is as follows. Cell adhesion protein that mediates homophilic cell adhesion in a calcium-independent manner. Plays a role as coinhibitory receptor in immune response, insulin action and also functions as an activator during angiogenesis. Its coinhibitory receptor function is phosphorylation- and PTPN6 -dependent, which in turn, suppress signal transduction of associated receptors by dephosphorylation of their downstream effectors. Plays a role in immune response, of T-cells, natural killer (NK) and neutrophils. Upon TCR/CD3 complex stimulation, inhibits TCR-mediated cytotoxicity by blocking granule exocytosis by mediating homophilic binding to adjacent cells, allowing interaction with and phosphorylation by LCK and interaction with the TCR/CD3 complex which recruits PTPN6 resulting in dephosphorylation of CD247 and ZAP70. Also inhibits T-cell proliferation and cytokine production through inhibition of JNK cascade and plays a crucial role in regulating autoimmunity and anti-tumor immunity by inhibiting T-cell through its interaction with HAVCR2. Upon natural killer (NK) cells activation, inhibit KLRK1-mediated cytolysis of CEACAM1-bearing tumor cells by trans-homophilic interactions with CEACAM1 on the target cell and lead to cis-interaction between CEACAM1 and KLRK1, allowing PTPN6 recruitment and then VAV1 dephosphorylation. Upon neutrophils activation negatively regulates IL1B production by recruiting PTPN6 to a SYK-TLR4-CEACAM1 complex, that dephosphorylates SYK, reducing the production of reactive oxygen species (ROS) and lysosome disruption, which in turn, reduces the activity of the inflammasome. Down-regulates neutrophil production by acting as a coinhibitory receptor for CSF3R by downregulating the CSF3R-STAT3 pathway through recruitment of PTPN6 that dephosphorylates CSF3R. Also regulates insulin action by promoting INS clearance and regulating lipogenesis in liver through regulating insulin signaling. Upon INS stimulation, undergoes phosphorylation by INSR leading to INS clearance by increasing receptor-mediated insulin endocytosis. This inernalization promotes interaction with FASN leading to receptor-mediated insulin degradation and to reduction of FASN activity leading to negative regulation of fatty acid synthesis. INSR-mediated phosphorylation also provokes a down-regulation of cell proliferation through SHC1 interaction resulting in decrease coupling of SHC1 to the MAPK3/ERK1-MAPK1/ERK2 and phosphatidylinositol 3-kinase pathways. Functions as activator in angiogenesis by promoting blood vessel remodeling through endothelial cell differentiation and migration and in arteriogenesis by increasing the number of collateral arteries and collateral vessel calibers after ischemia. Also regulates vascular permeability through the VEGFR2 signaling pathway resulting in control of nitric oxide production. Down-regulates cell growth in response to EGF through its interaction with SHC1 that mediates interaction with EGFR resulting in decrease coupling of SHC1 to the MAPK3/ERK1-MAPK1/ERK2 pathway. Negatively regulates platelet aggregation by decreasing platelet adhesion on type I collagen through the GPVI-FcRgamma complex. Inhibits cell migration and cell scattering through interaction with FLNA; interferes with the interaction of FLNA with RALA. Mediates bile acid transport activity in a phosphorylation dependent manner. Negatively regulates osteoclastogenesis. Cell adhesion protein that mediates homophilic cell adhesion in a calcium-independent manner. Promotes populations of T-cells regulating IgA production and secretion associated with control of the commensal microbiota and resistance to enteropathogens. In terms of biological role, (Microbial infection) In case of murine coronavirus (MHV) infection, serves as receptor for MHV S1 spike glycoprotein. In Mus musculus (Mouse), this protein is Cell adhesion molecule CEACAM1.